The following is a 236-amino-acid chain: MMRQSIRPLRAFSSEVSWIARRTQASLAKPGDLVPNKPEPSKNEQEPRFPRSIQALHLKPLKREAEHGIPSCDLQLRSFSVQPLEFFSDFALRAAYYLGLPAYGPVPLPRITERWTVPRDNFIFKKSQENFERKTLRRLIQIRDGNPETVQLWLAYLRKHQFYGVGMKANMWEFSELGEGKKMDALPEAEKGEIDAKWSHIGQTKTIGTMEKVEQILNQRRFREAAGLRVPPTTEA.

Residues 1–24 (MMRQSIRPLRAFSSEVSWIARRTQ) constitute a mitochondrion transit peptide. A disordered region spans residues 29 to 49 (KPGDLVPNKPEPSKNEQEPRF). The segment covering 39 to 49 (EPSKNEQEPRF) has biased composition (basic and acidic residues).

It belongs to the universal ribosomal protein uS10 family. Part of the mitochondrial small ribosomal subunit.

It is found in the mitochondrion. Involved in mitochondrial genome encoded proteins translation. Involved in the binding of tRNA to the ribosomes. In Gibberella zeae (strain ATCC MYA-4620 / CBS 123657 / FGSC 9075 / NRRL 31084 / PH-1) (Wheat head blight fungus), this protein is Small ribosomal subunit protein uS10m (RSM10).